We begin with the raw amino-acid sequence, 328 residues long: Putative lipase LIH1 (328 aa).

Residue Ser-181 is the Nucleophile of the active site. Active-site charge relay system residues include Asp-253 and His-315.

It belongs to the AB hydrolase superfamily. Lipase family.

It catalyses the reaction a triacylglycerol + H2O = a diacylglycerol + a fatty acid + H(+). Functionally, lipases catalyze the hydrolysis of the ester bond of tri-, di- and monoglycerides of long-chain fatty acids into fatty acids and glycerol. In Saccharomyces cerevisiae (strain ATCC 204508 / S288c) (Baker's yeast), this protein is Putative lipase LIH1.